A 263-amino-acid polypeptide reads, in one-letter code: Proteasome subunit beta type-5 (263 aa).

Residues 1-59 constitute a propeptide, removed in mature form; that stretch reads MALASVLERPLSVNRRGFFGLGGRADLLDLGPGSPSDGLSLAAPSWGVPEEPRIEILHG. T60 serves as the catalytic Nucleophile. Residue A108 participates in bortezomib binding.

Belongs to the peptidase T1B family. The 26S proteasome consists of a 20S proteasome core and two 19S regulatory subunits. The 20S proteasome core is a barrel-shaped complex made of 28 subunits that are arranged in four stacked rings. The two outer rings are each formed by seven alpha subunits, and the two inner rings are formed by seven beta subunits. The proteolytic activity is exerted by three beta-subunits PSMB5, PSMB6 and PSMB7. Directly interacts with POMP. Interacts with ABCB1 and TAP1.

The protein localises to the cytoplasm. Its subcellular location is the nucleus. It catalyses the reaction Cleavage of peptide bonds with very broad specificity.. Functionally, component of the 20S core proteasome complex involved in the proteolytic degradation of most intracellular proteins. This complex plays numerous essential roles within the cell by associating with different regulatory particles. Associated with two 19S regulatory particles, forms the 26S proteasome and thus participates in the ATP-dependent degradation of ubiquitinated proteins. The 26S proteasome plays a key role in the maintenance of protein homeostasis by removing misfolded or damaged proteins that could impair cellular functions, and by removing proteins whose functions are no longer required. Associated with the PA200 or PA28, the 20S proteasome mediates ubiquitin-independent protein degradation. This type of proteolysis is required in several pathways including spermatogenesis (20S-PA200 complex) or generation of a subset of MHC class I-presented antigenic peptides (20S-PA28 complex). Within the 20S core complex, PSMB5 displays a chymotrypsin-like activity. This is Proteasome subunit beta type-5 from Bos taurus (Bovine).